The following is a 536-amino-acid chain: Hydroxylamine oxidoreductase (536 aa).

A signal peptide spans 1-26 (MFEIFKKPLSRIVGATFAFAGVTLLA). Residues C116, C119, H120, H136, C160, C163, H164, H168, C179, C182, H183, H198, C223, C226, H227, C234, C237, H238, H241, C254, C257, and H258 each contribute to the heme c site. Hydroxylamine is bound at residue H263. The heme c site is built by H274, C301, C304, H305, H311, C346, C349, H350, H443, and Y451.

As to quaternary structure, homotrimer; subunits are linked by two covalent bonds between Tyr-451 of one subunit and heme P460 of an adjacent subunit. Requires heme c as cofactor.

The protein resides in the anammoxosome. The enzyme catalyses hydroxylamine + 3 Fe(III)-[cytochrome c] = nitric oxide + 3 Fe(II)-[cytochrome c] + 3 H(+). Its function is as follows. Catalyzes the oxidation of hydroxylamine to nitric oxide with cytochrome c acting as an electron acceptor. Does not oxidize hydroxylamine to nitrite. Also able to catalyze the four-electron oxidation of hydrazine to N(2) in vitro with reduced efficiency; however, this reaction is probably not physiological. The polypeptide is Hydroxylamine oxidoreductase (Kuenenia stuttgartiensis).